A 344-amino-acid polypeptide reads, in one-letter code: MTAREGRAPLARCAVVYGVVGLAAIAGVAMWSGAGWHRGTGTAGELPDAAAAGGAAAAPPQAALPASTGLPSSLAGSSAPRLPLDAGGHLAKSRAVRDFFDYCLTAQSDLSAAALDAFVVRQIAAQLDGTVAQAEALDVWHRYRAYLDALAKLRDAGAVDKSDLGALQLALDQRASIAYRTLGDWSQPFFGAEQWRQRYDLARLKIAQDRTLTDAQKAERLAALEQQMPADERAAQQRVDQQRAAIDRIAQLQKSGATPDAMRAQLTQTLGPEAAARVAQMQQDDASWQSRYADYATQRAEIESAGLSPQDRDAQIAALRQRTFTKPGEAVRAASLDRGAGSAQ.

A helical transmembrane segment spans residues 14–34; the sequence is AVVYGVVGLAAIAGVAMWSGA.

It belongs to the lipase chaperone family.

The protein resides in the cell inner membrane. Functionally, may be involved in the folding of the extracellular lipase during its passage through the periplasm. The sequence is that of Lipase chaperone (lifO) from Burkholderia cepacia (Pseudomonas cepacia).